The chain runs to 180 residues: NADH-quinone oxidoreductase subunit I (180 aa).

2 consecutive 4Fe-4S ferredoxin-type domains span residues 50–80 (LTRDPDGEERCVACNLCAVACPVGCISLQKA) and 90–119 (EFFRINFSRCIFCGLCEEACPTTAIQLTPD). Cysteine 60, cysteine 63, cysteine 66, cysteine 70, cysteine 99, cysteine 102, cysteine 105, and cysteine 109 together coordinate [4Fe-4S] cluster.

It belongs to the complex I 23 kDa subunit family. In terms of assembly, NDH-1 is composed of 13 different subunits. Subunits NuoA, H, J, K, L, M, N constitute the membrane sector of the complex. Requires [4Fe-4S] cluster as cofactor.

The protein resides in the cell inner membrane. The enzyme catalyses a quinone + NADH + 5 H(+)(in) = a quinol + NAD(+) + 4 H(+)(out). NDH-1 shuttles electrons from NADH, via FMN and iron-sulfur (Fe-S) centers, to quinones in the respiratory chain. The immediate electron acceptor for the enzyme in this species is believed to be ubiquinone. Couples the redox reaction to proton translocation (for every two electrons transferred, four hydrogen ions are translocated across the cytoplasmic membrane), and thus conserves the redox energy in a proton gradient. This is NADH-quinone oxidoreductase subunit I from Salmonella choleraesuis (strain SC-B67).